We begin with the raw amino-acid sequence, 216 residues long: Protein-L-isoaspartate O-methyltransferase 1 (216 aa).

Ser-60 is a catalytic residue.

Belongs to the methyltransferase superfamily. L-isoaspartyl/D-aspartyl protein methyltransferase family.

It is found in the cytoplasm. The catalysed reaction is [protein]-L-isoaspartate + S-adenosyl-L-methionine = [protein]-L-isoaspartate alpha-methyl ester + S-adenosyl-L-homocysteine. Catalyzes the methyl esterification of L-isoaspartyl residues in peptides and proteins that result from spontaneous decomposition of normal L-aspartyl and L-asparaginyl residues. It plays a role in the repair and/or degradation of damaged proteins. The polypeptide is Protein-L-isoaspartate O-methyltransferase 1 (pcm1) (Archaeoglobus fulgidus (strain ATCC 49558 / DSM 4304 / JCM 9628 / NBRC 100126 / VC-16)).